We begin with the raw amino-acid sequence, 235 residues long: Phosphoribosylaminoimidazole-succinocarboxamide synthase (235 aa).

Belongs to the SAICAR synthetase family.

It catalyses the reaction 5-amino-1-(5-phospho-D-ribosyl)imidazole-4-carboxylate + L-aspartate + ATP = (2S)-2-[5-amino-1-(5-phospho-beta-D-ribosyl)imidazole-4-carboxamido]succinate + ADP + phosphate + 2 H(+). It participates in purine metabolism; IMP biosynthesis via de novo pathway; 5-amino-1-(5-phospho-D-ribosyl)imidazole-4-carboxamide from 5-amino-1-(5-phospho-D-ribosyl)imidazole-4-carboxylate: step 1/2. This is Phosphoribosylaminoimidazole-succinocarboxamide synthase from Chlorobium chlorochromatii (strain CaD3).